The following is a 155-amino-acid chain: Large ribosomal subunit protein bL17 (155 aa).

The protein belongs to the bacterial ribosomal protein bL17 family. As to quaternary structure, part of the 50S ribosomal subunit. Contacts protein L32.

The chain is Large ribosomal subunit protein bL17 from Bifidobacterium adolescentis (strain ATCC 15703 / DSM 20083 / NCTC 11814 / E194a).